The primary structure comprises 572 residues: AAA ATPase forming ring-shaped complexes (572 aa).

The segment covering 1-18 (MTTASQQTSSHSTASSTS) has biased composition (low complexity). Positions 1–30 (MTTASQQTSSHSTASSTSRKGNNNDATPSL) are disordered. Residues 42-70 (TRNAKLVEMLKASRDKLDALNEQIRALSD) are a coiled coil. Position 258-263 (258-263 (GCGKTL)) interacts with ATP. The disordered stretch occupies residues 543 to 572 (VAHHNRKTTTETEATEPEGTDSGKGHTDAS). Residues 563 to 572 (DSGKGHTDAS) show a composition bias toward basic and acidic residues.

This sequence belongs to the AAA ATPase family. Homohexamer. Assembles into a hexameric ring structure.

The protein is AAA ATPase forming ring-shaped complexes of Corynebacterium kroppenstedtii (strain DSM 44385 / JCM 11950 / CIP 105744 / CCUG 35717).